Reading from the N-terminus, the 940-residue chain is Isoleucine--tRNA ligase (940 aa).

The 'HIGH' region motif lies at 58–68 (PYANGSIHIGH). Glu564 lines the L-isoleucyl-5'-AMP pocket. The short motif at 605 to 609 (KMSKS) is the 'KMSKS' region element. Residue Lys608 participates in ATP binding. Zn(2+) contacts are provided by Cys903, Cys906, Cys923, and Cys926.

Belongs to the class-I aminoacyl-tRNA synthetase family. IleS type 1 subfamily. In terms of assembly, monomer. It depends on Zn(2+) as a cofactor.

It localises to the cytoplasm. The enzyme catalyses tRNA(Ile) + L-isoleucine + ATP = L-isoleucyl-tRNA(Ile) + AMP + diphosphate. Functionally, catalyzes the attachment of isoleucine to tRNA(Ile). As IleRS can inadvertently accommodate and process structurally similar amino acids such as valine, to avoid such errors it has two additional distinct tRNA(Ile)-dependent editing activities. One activity is designated as 'pretransfer' editing and involves the hydrolysis of activated Val-AMP. The other activity is designated 'posttransfer' editing and involves deacylation of mischarged Val-tRNA(Ile). This Shewanella sp. (strain W3-18-1) protein is Isoleucine--tRNA ligase.